A 575-amino-acid chain; its full sequence is Dual specificity protein phosphatase YVH1 (575 aa).

The interval 185 to 213 (KHNNNNNNNNNNNNNNNNNNNNNNCCTFK) is disordered. Low complexity predominate over residues 187–208 (NNNNNNNNNNNNNNNNNNNNNN). One can recognise a Tyrosine-protein phosphatase domain in the interval 283–435 (NYKINQEEDT…LLLYEKMNYT (153 aa)). Cysteine 379 acts as the Phosphocysteine intermediate in catalysis. Positions 476 and 530 each coordinate Zn(2+).

Belongs to the protein-tyrosine phosphatase family. Non-receptor class dual specificity subfamily. Interacts with PES. It depends on Zn(2+) as a cofactor.

It is found in the cytoplasm. The protein localises to the nucleus. The enzyme catalyses O-phospho-L-tyrosyl-[protein] + H2O = L-tyrosyl-[protein] + phosphate. The catalysed reaction is O-phospho-L-seryl-[protein] + H2O = L-seryl-[protein] + phosphate. Functionally, dual specificity protein phosphatase which dephosphorylates both phosphotyrosine and phosphoserine residues. The sequence is that of Dual specificity protein phosphatase YVH1 from Plasmodium falciparum (isolate 3D7).